Consider the following 118-residue polypeptide: Large ribosomal subunit protein bL17 (118 aa).

The protein belongs to the bacterial ribosomal protein bL17 family. Part of the 50S ribosomal subunit. Contacts protein L32.

The protein is Large ribosomal subunit protein bL17 of Phytoplasma australiense.